A 294-amino-acid chain; its full sequence is Holothin acyltransferase (294 aa).

One can recognise an N-acetyltransferase domain in the interval 17–146 (WTSKPASLEE…SRLVGIHNQQ (130 aa)).

The enzyme catalyses marinoloyl-CoA C + holothin = thiomarinol C + CoA. It catalyses the reaction pseudomonoyl-CoA C + holothin = pseudomonic acid C--holothin + CoA. Its pathway is antibiotic biosynthesis. Acyltransferase that catalyzes the formation of pseudomonic acid C-holothin (PAC-holothin), a thiomarinol analog, from pseudomonoyl-CoA C (PAC-CoA) and holothin. Accepts linear CoA substrates of different lengths, including propionyl-, hexanoyl-, octanoyl-, oleoyl- and dodecanoyl-CoA, readily converting all into the corresponding acyl-holothin adducts. In vivo, is probably involved in the biosynthesis of thiomarinol, a naturally occurring double-headed antibiotic. This chain is Holothin acyltransferase, found in Pseudoalteromonas sp. (strain SANK 73390).